Reading from the N-terminus, the 389-residue chain is Phospho-N-acetylmuramoyl-pentapeptide-transferase (389 aa).

The next 10 helical transmembrane spans lie at 25 to 45, 73 to 93, 97 to 117, 135 to 155, 190 to 210, 222 to 242, 258 to 278, 286 to 306, 311 to 331, and 366 to 386; these read RAVM…PWVI, TMGG…WGDL, FIWI…VDDY, FWQS…VSEA, ISYP…IVGA, GLVI…AYVM, GAGE…AFLW, VFMG…VAVI, IVLF…MLQV, and QVVV…LSTL.

The protein belongs to the glycosyltransferase 4 family. MraY subfamily. Mg(2+) serves as cofactor.

The protein localises to the cell inner membrane. It catalyses the reaction UDP-N-acetyl-alpha-D-muramoyl-L-alanyl-gamma-D-glutamyl-meso-2,6-diaminopimeloyl-D-alanyl-D-alanine + di-trans,octa-cis-undecaprenyl phosphate = di-trans,octa-cis-undecaprenyl diphospho-N-acetyl-alpha-D-muramoyl-L-alanyl-D-glutamyl-meso-2,6-diaminopimeloyl-D-alanyl-D-alanine + UMP. The protein operates within cell wall biogenesis; peptidoglycan biosynthesis. In terms of biological role, catalyzes the initial step of the lipid cycle reactions in the biosynthesis of the cell wall peptidoglycan: transfers peptidoglycan precursor phospho-MurNAc-pentapeptide from UDP-MurNAc-pentapeptide onto the lipid carrier undecaprenyl phosphate, yielding undecaprenyl-pyrophosphoryl-MurNAc-pentapeptide, known as lipid I. The protein is Phospho-N-acetylmuramoyl-pentapeptide-transferase of Burkholderia pseudomallei (strain 1106a).